Consider the following 367-residue polypeptide: MAIKTESFILNIGPQHPSTHGVFRLRLILDGEVITDLEPVFGYLHRGIEKLAEGRTYLQDIPFTDRLDYLGSMTNNHAYVMAVEKLAGITVPERAEYIRVILDELQRIASHLAGLGFFLNDLGALQTPLLYMFREREKIVELFDMCSGQRLNYNYYRFGGFVQDLPEEFLPALKKLLDTLPGFIDEYEQLISTNEIVLIRTKGVGVLKRELAINSSAAGPVLRASGVNWDIRRNDPYSIYDRFEFDIPTAQNGDTYDRYMVRIREMRQSVRILRQAVKDLPEGEIMGKAPKLLKPPAGEVYSRIEGPKGELGFYLVSDGTDKPYRWRVRPPCLLNLSALKDMVVGWKVADLMAIFGSIDIVMGEVDR.

This sequence belongs to the complex I 49 kDa subunit family. In terms of assembly, NDH-1 is composed of 14 different subunits. Subunits NuoB, C, D, E, F, and G constitute the peripheral sector of the complex.

It localises to the cell membrane. The enzyme catalyses a quinone + NADH + 5 H(+)(in) = a quinol + NAD(+) + 4 H(+)(out). In terms of biological role, NDH-1 shuttles electrons from NADH, via FMN and iron-sulfur (Fe-S) centers, to quinones in the respiratory chain. The immediate electron acceptor for the enzyme in this species is believed to be ubiquinone. Couples the redox reaction to proton translocation (for every two electrons transferred, four hydrogen ions are translocated across the cytoplasmic membrane), and thus conserves the redox energy in a proton gradient. The chain is NADH-quinone oxidoreductase subunit D from Dehalococcoides mccartyi (strain ATCC BAA-2266 / KCTC 15142 / 195) (Dehalococcoides ethenogenes (strain 195)).